Reading from the N-terminus, the 350-residue chain is Ion-translocating oxidoreductase complex subunit D (350 aa).

The next 3 membrane-spanning stretches (helical) occupy residues 25-45, 89-109, and 124-144; these read ALCL…GSLI, IPPL…IIIV, and AMAG…SWVA. FMN phosphoryl threonine is present on Thr-185. 5 helical membrane-spanning segments follow: residues 212–232, 239–259, 265–285, 298–318, and 319–339; these read SYGV…LVLL, WHIS…GFLI, VSPL…FIAT, LIFG…GGYP, and DAVA…DHYV.

This sequence belongs to the NqrB/RnfD family. As to quaternary structure, the complex is composed of six subunits: RnfA, RnfB, RnfC, RnfD, RnfE and RnfG. It depends on FMN as a cofactor.

The protein resides in the cell inner membrane. Part of a membrane-bound complex that couples electron transfer with translocation of ions across the membrane. The chain is Ion-translocating oxidoreductase complex subunit D from Shewanella denitrificans (strain OS217 / ATCC BAA-1090 / DSM 15013).